The sequence spans 327 residues: GMP reductase (327 aa).

Catalysis depends on Cys-175, which acts as the Thioimidate intermediate. 204 to 227 (IIADGGIRTHGDVAKSIRFGATMV) is a binding site for NADP(+).

This sequence belongs to the IMPDH/GMPR family. GuaC type 2 subfamily.

The enzyme catalyses IMP + NH4(+) + NADP(+) = GMP + NADPH + 2 H(+). Functionally, catalyzes the irreversible NADPH-dependent deamination of GMP to IMP. It functions in the conversion of nucleobase, nucleoside and nucleotide derivatives of G to A nucleotides, and in maintaining the intracellular balance of A and G nucleotides. The protein is GMP reductase of Bacillus cereus (strain ATCC 10987 / NRS 248).